The following is a 1590-amino-acid chain: Pentafunctional AROM polypeptide (1590 aa).

Positions 1–400 are 3-dehydroquinate synthase; the sequence is MSTANGSSPT…HEPKASSVDD (400 aa). Residues 49-51, 96-99, 127-129, and Asp-132 contribute to the NAD(+) site; these read DTN, EGSK, and GGV. Residue Arg-143 coordinates 7-phospho-2-dehydro-3-deoxy-D-arabino-heptonate. 152-153 is an NAD(+) binding site; sequence TT. 2 residues coordinate 7-phospho-2-dehydro-3-deoxy-D-arabino-heptonate: Asp-159 and Lys-165. Lys-174 contacts NAD(+). Asn-175 contributes to the 7-phospho-2-dehydro-3-deoxy-D-arabino-heptonate binding site. Residues 192–195 and Asn-203 contribute to the NAD(+) site; that span reads FLNT. Residue Glu-207 participates in Zn(2+) binding. 7-phospho-2-dehydro-3-deoxy-D-arabino-heptonate contacts are provided by residues 207 to 210 and Lys-266; that span reads EVIK. The Proton acceptor; for 3-dehydroquinate synthase activity role is filled by Glu-276. 7-phospho-2-dehydro-3-deoxy-D-arabino-heptonate-binding positions include 280–284 and His-287; that span reads RNLLN. His-287 lines the Zn(2+) pocket. The active-site Proton acceptor; for 3-dehydroquinate synthase activity is His-291. 7-phospho-2-dehydro-3-deoxy-D-arabino-heptonate is bound by residues His-303 and Lys-372. Residue His-303 coordinates Zn(2+). An EPSP synthase region spans residues 413 to 856; that stretch reads VQPGVRPGLK…WDVLSGVFGV (444 aa). Catalysis depends on Cys-838, which acts as the For EPSP synthase activity. The segment at 876 to 1070 is shikimate kinase; the sequence is NRSVFVIGMR…KAKPHSFFVS (195 aa). 883 to 890 contacts ATP; the sequence is GMRGAGKS. The tract at residues 1071 to 1285 is 3-dehydroquinase; sequence LTVPNITAHT…AAPGQLTAAE (215 aa). His-1187 acts as the Proton acceptor; for 3-dehydroquinate dehydratase activity in catalysis. Lys-1215 acts as the Schiff-base intermediate with substrate; for 3-dehydroquinate dehydratase activity in catalysis. A shikimate dehydrogenase region spans residues 1298 to 1590; sequence KRKFYLFGKP…IVMNGTSDSS (293 aa).

This sequence in the N-terminal section; belongs to the sugar phosphate cyclases superfamily. Dehydroquinate synthase family. It in the 2nd section; belongs to the EPSP synthase family. The protein in the 3rd section; belongs to the shikimate kinase family. In the 4th section; belongs to the type-I 3-dehydroquinase family. This sequence in the C-terminal section; belongs to the shikimate dehydrogenase family. As to quaternary structure, homodimer. Requires Zn(2+) as cofactor.

It localises to the cytoplasm. The enzyme catalyses 7-phospho-2-dehydro-3-deoxy-D-arabino-heptonate = 3-dehydroquinate + phosphate. It carries out the reaction 3-dehydroquinate = 3-dehydroshikimate + H2O. The catalysed reaction is shikimate + NADP(+) = 3-dehydroshikimate + NADPH + H(+). It catalyses the reaction shikimate + ATP = 3-phosphoshikimate + ADP + H(+). The enzyme catalyses 3-phosphoshikimate + phosphoenolpyruvate = 5-O-(1-carboxyvinyl)-3-phosphoshikimate + phosphate. The protein operates within metabolic intermediate biosynthesis; chorismate biosynthesis; chorismate from D-erythrose 4-phosphate and phosphoenolpyruvate: step 2/7. It participates in metabolic intermediate biosynthesis; chorismate biosynthesis; chorismate from D-erythrose 4-phosphate and phosphoenolpyruvate: step 3/7. Its pathway is metabolic intermediate biosynthesis; chorismate biosynthesis; chorismate from D-erythrose 4-phosphate and phosphoenolpyruvate: step 4/7. It functions in the pathway metabolic intermediate biosynthesis; chorismate biosynthesis; chorismate from D-erythrose 4-phosphate and phosphoenolpyruvate: step 5/7. The protein operates within metabolic intermediate biosynthesis; chorismate biosynthesis; chorismate from D-erythrose 4-phosphate and phosphoenolpyruvate: step 6/7. The AROM polypeptide catalyzes 5 consecutive enzymatic reactions in prechorismate polyaromatic amino acid biosynthesis. The chain is Pentafunctional AROM polypeptide from Pyricularia oryzae (strain 70-15 / ATCC MYA-4617 / FGSC 8958) (Rice blast fungus).